The following is a 354-amino-acid chain: MAIDENKQKALAAALGQIEKQFGKGSIMRLGEDRSMDVETISTGSLSLDIALGAGGLPMGRIVEIYGPESSGKTTLTLQVIAAAQREGKTCAFIDAEHALDPIYAKKLGVDIDNLLCSQPDTGEQALEICDALTRSGAVDVIIVDSVAALTPKAEIEGEIGDSHMGLAARMMSQAMRKLAGNLKNANTLLIFINQIRMKIGVMFGNPETTTGGNALKFYASVRLDIRRIGAIKEGDVVVGSETRVKVVKNKIAAPFKQAEFQILYGEGININGELIDLGVKHKLIEKAGAWYSYNGEKIGQGKANSCNYLKENPKVAAELDKKLRDMLLSGTGELSVATTAEDADDNMETSEEF.

Residue 67–74 (GPESSGKT) participates in ATP binding.

It belongs to the RecA family.

The protein resides in the cytoplasm. In terms of biological role, can catalyze the hydrolysis of ATP in the presence of single-stranded DNA, the ATP-dependent uptake of single-stranded DNA by duplex DNA, and the ATP-dependent hybridization of homologous single-stranded DNAs. It interacts with LexA causing its activation and leading to its autocatalytic cleavage. This is Protein RecA from Enterobacter agglomerans (Erwinia herbicola).